The chain runs to 177 residues: Nucleoside triphosphate/diphosphate phosphatase (177 aa).

Residue arginine 23 is the Proton donor of the active site. Mg(2+) is bound by residues asparagine 87, aspartate 103, aspartate 105, aspartate 107, aspartate 120, and glutamate 123.

This sequence belongs to the Ntdp family. Mg(2+) serves as cofactor.

The catalysed reaction is a ribonucleoside 5'-triphosphate + H2O = a ribonucleoside 5'-diphosphate + phosphate + H(+). It carries out the reaction a ribonucleoside 5'-diphosphate + H2O = a ribonucleoside 5'-phosphate + phosphate + H(+). Its function is as follows. Has nucleoside phosphatase activity towards nucleoside triphosphates and nucleoside diphosphates. The polypeptide is Nucleoside triphosphate/diphosphate phosphatase (Enterococcus faecalis (strain ATCC 700802 / V583)).